We begin with the raw amino-acid sequence, 1026 residues long: MRFFALFIYRPVATILIAAAITLCGILGFRLLPVAPLPQVDFPVIMVSASLPGASPETMASSVATPLERSLGRIAGVNEMTSSSSLGSTRIILEFNFDRDINGAARDVQAAINAAQSLLPGGMPSRPTYRKANPSDAPIMILTLTSESWSQGKLYDFASTQLAQTIAQIDGVGDVDVGGSSLPAVRVGLNPQALFNQGVSLDEVREAIDSANVRRPQGAIEDSVHRWQIQTNDELKTAAEYQPLIIHYNNGAAVRLGDVASVTDSVQDVRNAGMTNAKPAILLMIRKLPEANIIQTVDGIRAKLPELRAMIPAAIDLQIAQDRSPTIRASLQEVEETLAISVALVILVVFLFLRSGRATLIPAVAVPVSLIGTFAAMYLCGFSLNNLSLMALTIATGFVVDDAIVVLENIARHLEAGMKPLQAALQGTREVGFTVISMSLSLVAVFLPLLLMGGLPGRLLREFAVTLSVAIGISLVVSLTLTPMMCGWMLKSSKPRTQPRKRGVGRLLVALQQGYGTSLKWVLNHTRLVGVVFLGTVALNIWLYIAIPKTFFPEQDTGVLMGGIQADQSISFQAMRGKLQDFMKIIRDDPAVNNVTGFTGGSRVNSGMMFITLKPRGERKETAQQIIDRLRVKLAKEPGARLFLMAVQDIRVGGRQANASYQYTLLSDSLPALREWEPKIRKALSALPQLADVNSDQQDNGAEMNLIYDRDTMSRLGIDVQAANSLLNNTFGQRQISTIYQPMNQYKVVMEVDPRYTQDISALEKMFVINRDGKAIPLSYFAQWRPANAPLSVNHQGLSAASTIAFNLPTGTSLSQATEAINRTMTQLGVPSTVRGSFSGTAQVFQQTMNSQLILIVAAIATVYIVLEILYESYVHPLTILSTLPSASVGALLALELFNAPFSLIALIGIMLLIGIVKKNAIMMVDFALEAQRSGGLTPEQAIFQACLLRFRPIMMTTLAALFGALPLVLSGGDGSELRQPLGITIVGGLVMSQLLTLYTTPVVYLFFDRLRLRFSRKNSKPVVEI.

A run of 11 helical transmembrane segments spans residues 15-35, 333-353, 360-380, 387-407, 431-451, 463-483, 528-548, 853-873, 897-917, 953-973, and 984-1004; these read ILIA…LPVA, EVEE…FLFL, LIPA…MYLC, LSLM…IVVL, VGFT…PLLL, FAVT…TLTP, LVGV…IAIP, LILI…LYES, LFNA…IGIV, PIMM…LSGG, and ITIV…TPVV.

Belongs to the resistance-nodulation-cell division (RND) (TC 2.A.6) family. MdtC subfamily. As to quaternary structure, part of a tripartite efflux system composed of MdtA, MdtB and MdtC. MdtC forms a heteromultimer with MdtB.

The protein localises to the cell inner membrane. In Salmonella paratyphi A (strain ATCC 9150 / SARB42), this protein is Multidrug resistance protein MdtC.